The sequence spans 137 residues: ATP synthase epsilon chain (137 aa).

Belongs to the ATPase epsilon chain family. F-type ATPases have 2 components, CF(1) - the catalytic core - and CF(0) - the membrane proton channel. CF(1) has five subunits: alpha(3), beta(3), gamma(1), delta(1), epsilon(1). CF(0) has three main subunits: a, b and c.

The protein localises to the cellular thylakoid membrane. Its function is as follows. Produces ATP from ADP in the presence of a proton gradient across the membrane. The sequence is that of ATP synthase epsilon chain (atpC) from Nostoc sp. (strain PCC 7120 / SAG 25.82 / UTEX 2576).